Here is a 77-residue protein sequence, read N- to C-terminus: Large ribosomal subunit protein eL20 (77 aa).

The protein belongs to the eukaryotic ribosomal protein eL20 family. In terms of assembly, part of the 50S ribosomal subunit. Binds 23S rRNA.

The chain is Large ribosomal subunit protein eL20 from Pyrococcus abyssi (strain GE5 / Orsay).